The following is a 399-amino-acid chain: Dual-specificity RNA methyltransferase RlmN (399 aa).

E122 acts as the Proton acceptor in catalysis. Positions E128–L371 constitute a Radical SAM core domain. A disulfide bridge connects residues C135 and C374. Residues C142, C146, and C149 each contribute to the [4Fe-4S] cluster site. S-adenosyl-L-methionine is bound by residues G200–E201, S232, S254–H256, and N331. The active-site S-methylcysteine intermediate is C374.

Belongs to the radical SAM superfamily. RlmN family. [4Fe-4S] cluster is required as a cofactor.

It is found in the cytoplasm. It carries out the reaction adenosine(2503) in 23S rRNA + 2 reduced [2Fe-2S]-[ferredoxin] + 2 S-adenosyl-L-methionine = 2-methyladenosine(2503) in 23S rRNA + 5'-deoxyadenosine + L-methionine + 2 oxidized [2Fe-2S]-[ferredoxin] + S-adenosyl-L-homocysteine. The catalysed reaction is adenosine(37) in tRNA + 2 reduced [2Fe-2S]-[ferredoxin] + 2 S-adenosyl-L-methionine = 2-methyladenosine(37) in tRNA + 5'-deoxyadenosine + L-methionine + 2 oxidized [2Fe-2S]-[ferredoxin] + S-adenosyl-L-homocysteine. Its function is as follows. Specifically methylates position 2 of adenine 2503 in 23S rRNA and position 2 of adenine 37 in tRNAs. m2A2503 modification seems to play a crucial role in the proofreading step occurring at the peptidyl transferase center and thus would serve to optimize ribosomal fidelity. This is Dual-specificity RNA methyltransferase RlmN from Rhodopseudomonas palustris (strain HaA2).